The chain runs to 189 residues: Probable nicotinate-nucleotide adenylyltransferase (189 aa).

The protein belongs to the NadD family.

The enzyme catalyses nicotinate beta-D-ribonucleotide + ATP + H(+) = deamido-NAD(+) + diphosphate. It functions in the pathway cofactor biosynthesis; NAD(+) biosynthesis; deamido-NAD(+) from nicotinate D-ribonucleotide: step 1/1. Its function is as follows. Catalyzes the reversible adenylation of nicotinate mononucleotide (NaMN) to nicotinic acid adenine dinucleotide (NaAD). This Cereibacter sphaeroides (strain ATCC 17023 / DSM 158 / JCM 6121 / CCUG 31486 / LMG 2827 / NBRC 12203 / NCIMB 8253 / ATH 2.4.1.) (Rhodobacter sphaeroides) protein is Probable nicotinate-nucleotide adenylyltransferase.